Consider the following 256-residue polypeptide: MLRIADKTFDSHLFTGTGKFASSQLMVEAIRASGSQLVTLAMKRVDLRQHNDAILAPLIEAGVTLLPNTSGAKTAEEAIFAAQLAREALGTNWLKLEIHPDARWLLPDPIETLKAAEALVKQGFVVLPYCGADPVLCKRLEEVGCAAVMPLGAPIGSNQGLETKAMLEIIIQQSTVPVVVDAGIGVPSHATQALEMGADAVLVNTAIAVADDPVMMATAFRLAVEAGVLARQAVPGNRSTYASATSPLTGFLEALA.

Residue K95 is the Schiff-base intermediate with DXP of the active site. 1-deoxy-D-xylulose 5-phosphate contacts are provided by residues G156, 182–183, and 204–205; these read AG and NT.

The protein belongs to the ThiG family. In terms of assembly, homotetramer. Forms heterodimers with either ThiH or ThiS.

It is found in the cytoplasm. The catalysed reaction is [ThiS sulfur-carrier protein]-C-terminal-Gly-aminoethanethioate + 2-iminoacetate + 1-deoxy-D-xylulose 5-phosphate = [ThiS sulfur-carrier protein]-C-terminal Gly-Gly + 2-[(2R,5Z)-2-carboxy-4-methylthiazol-5(2H)-ylidene]ethyl phosphate + 2 H2O + H(+). It participates in cofactor biosynthesis; thiamine diphosphate biosynthesis. Functionally, catalyzes the rearrangement of 1-deoxy-D-xylulose 5-phosphate (DXP) to produce the thiazole phosphate moiety of thiamine. Sulfur is provided by the thiocarboxylate moiety of the carrier protein ThiS. In vitro, sulfur can be provided by H(2)S. This chain is Thiazole synthase, found in Salmonella agona (strain SL483).